The following is a 3357-amino-acid chain: Versican core protein (3357 aa).

Positions methionine 1–glutamine 23 are cleaved as a signal peptide. One can recognise an Ig-like V-type domain in the interval alanine 24–alanine 146. Cystine bridges form between cysteine 44–cysteine 130, cysteine 172–cysteine 243, cysteine 196–cysteine 217, cysteine 270–cysteine 333, and cysteine 294–cysteine 315. Asparagine 57 is a glycosylation site (N-linked (GlcNAc...) asparagine). Link domains follow at residues valine 150–valine 245 and aspartate 251–lysine 347. Residues asparagine 330, asparagine 351, and asparagine 441 are each glycosylated (N-linked (GlcNAc...) asparagine). A GAG-alpha (glucosaminoglycan attachment domain) region spans residues proline 348 to glycine 1308. The segment covering glutamate 625–glutamate 634 has biased composition (basic and acidic residues). The disordered stretch occupies residues glutamate 625–phenylalanine 646. O-linked (Xyl...) (chondroitin sulfate) serine glycosylation is present at serine 660. 2 disordered regions span residues tryptophan 801–glutamate 863 and threonine 881–threonine 908. Residue asparagine 807 is glycosylated (N-linked (GlcNAc...) asparagine). Residues asparagine 914 and asparagine 951 are each glycosylated (N-linked (GlcNAc...) asparagine). 2 disordered regions span residues serine 1010–glycine 1088 and aspartate 1252–glycine 1288. 2 stretches are compositionally biased toward polar residues: residues threonine 1017 to alanine 1042 and serine 1275 to alanine 1286. N-linked (GlcNAc...) asparagine glycosylation is found at asparagine 1305 and asparagine 1371. Residues arginine 1309–glycine 3051 are GAG-beta. Positions aspartate 1396–glutamine 1406 are enriched in basic and acidic residues. 2 disordered regions span residues aspartate 1396–alanine 1421 and threonine 1458–glutamine 1524. Composition is skewed to polar residues over residues alanine 1411–alanine 1421 and tryptophan 1487–leucine 1498. O-linked (Xyl...) (chondroitin sulfate) serine glycosylation is found at serine 1517 and serine 1599. The disordered stretch occupies residues leucine 1664–asparagine 1705. Polar residues predominate over residues threonine 1673–tryptophan 1683. An N-linked (GlcNAc...) asparagine glycan is attached at asparagine 1678. Positions valine 1684–asparagine 1697 are enriched in basic and acidic residues. Serine 1907 and serine 1931 each carry an O-linked (Xyl...) (chondroitin sulfate) serine glycan. Positions valine 1926 to valine 1965 are disordered. A compositionally biased stretch (polar residues) spans threonine 1939–asparagine 1951. The N-linked (GlcNAc...) asparagine glycan is linked to asparagine 2053. 2 O-linked (Xyl...) (chondroitin sulfate) serine glycosylation sites follow: serine 2219 and serine 2226. An N-linked (GlcNAc...) asparagine glycan is attached at asparagine 2243. A compositionally biased stretch (polar residues) spans threonine 2308–leucine 2322. Disordered stretches follow at residues threonine 2308 to proline 2374 and tyrosine 2475 to glutamate 2494. Residue asparagine 2361 is glycosylated (N-linked (GlcNAc...) asparagine). The span at tyrosine 2475–tyrosine 2486 shows a compositional bias: low complexity. Serine 2585 and serine 2586 each carry phosphoserine. Asparagine 2626 is a glycosylation site (N-linked (GlcNAc...) asparagine). Serine 2696, serine 2697, and serine 2741 each carry an O-linked (Xyl...) (chondroitin sulfate) serine glycan. The disordered stretch occupies residues leucine 2853–proline 2908. Residues threonine 2888–phenylalanine 2899 show a composition bias toward polar residues. Asparagine 3029 carries an N-linked (GlcNAc...) asparagine glycan. In terms of domain architecture, EGF-like 1 spans glycine 3051 to glutamate 3087. Cystine bridges form between cysteine 3055–cysteine 3066, cysteine 3060–cysteine 3075, cysteine 3077–cysteine 3086, cysteine 3093–cysteine 3104, cysteine 3098–cysteine 3113, cysteine 3115–cysteine 3124, cysteine 3131–cysteine 3142, cysteine 3159–cysteine 3251, cysteine 3227–cysteine 3243, cysteine 3258–cysteine 3301, and cysteine 3287–cysteine 3314. In terms of domain architecture, EGF-like 2; calcium-binding spans aspartate 3089–glutamate 3125. The C-type lectin domain maps to phenylalanine 3138–lysine 3252. The 61-residue stretch at valine 3256–asparagine 3316 folds into the Sushi domain. N-linked (GlcNAc...) asparagine glycans are attached at residues asparagine 3331 and asparagine 3341. The segment covering asparagine 3331–threonine 3342 has biased composition (polar residues). The disordered stretch occupies residues asparagine 3331 to arginine 3357.

This sequence belongs to the aggrecan/versican proteoglycan family. In terms of assembly, interacts with FBLN1. In terms of processing, phosphorylated by FAM20C in the extracellular medium. Post-translationally, proteolytically cleaved by ADAMTS5 and ADAMTS15 in the pericellular matrix surrounding myoblasts, facilitating myoblast contact and fusion which is required for skeletal muscle development and regeneration. In terms of tissue distribution, expressed in the retina (at protein level). Isoform V2: Only expressed in brain.

Its subcellular location is the secreted. The protein resides in the extracellular space. It localises to the extracellular matrix. It is found in the cell projection. The protein localises to the cilium. Its subcellular location is the photoreceptor outer segment. The protein resides in the interphotoreceptor matrix. In terms of biological role, may play a role in intercellular signaling and in connecting cells with the extracellular matrix. May take part in the regulation of cell motility, growth and differentiation. Binds hyaluronic acid. The chain is Versican core protein (Vcan) from Mus musculus (Mouse).